Here is a 433-residue protein sequence, read N- to C-terminus: Hps1-dma1 cluster O-methyltransferase (433 aa).

A disordered region spans residues 36 to 55 (NGHPERSLNSTDSVRLSDAP). S-adenosyl-L-methionine is bound at residue aspartate 285. Histidine 331 serves as the catalytic Proton acceptor.

The protein belongs to the class I-like SAM-binding methyltransferase superfamily. Cation-independent O-methyltransferase family. COMT subfamily.

Its pathway is secondary metabolite biosynthesis. O-methyltransferase; part of the hps1-dma1 gene cluster that probably mediates the biosynthesis a derivative of cyclopiazonic acid (CPA). The hybrid polyketide synthase-nonribosomal peptide synthetase (PKS-NRPS) nps1 might incorporates acetyl-CoA, malonyl-CoA, and tryptophan (Trp) and utilizes a C-terminal redox-incompetent reductase domain to make and release the tryptophan tetramic acid, cyclo-acetoacetyl-L-tryptophan (c-AATrp), as the first intermediate in the pathway. In addition, the cluster also includes the tryptophan dimethylallyltransferase dma1, the FAD-dependent oxidoreductase toxD, the cytochrome P450 monooxygenase cyp3.1 and the methyltransferase DOTSEDRAFT_139328; the latter 2 being not present in all CPA-producing fungi but involved in additional modifications that occur in biosynthesis the of a range of CPA and CPA-like products. Further studies are required to clarify whether the CPA-like hps1-dma1 cluster is functional or a non-functional relic reflecting evolution of D.septosporum. The protein is Hps1-dma1 cluster O-methyltransferase of Dothistroma septosporum (strain NZE10 / CBS 128990) (Red band needle blight fungus).